The primary structure comprises 747 residues: NAD(P)H-quinone oxidoreductase subunit 5, chloroplastic (747 aa).

A run of 16 helical transmembrane segments spans residues 8–28 (AWII…ELLL), 39–59 (IWAF…TKLA), 89–109 (IDPL…MVLI), 125–145 (FAYM…PNLI), 147–167 (IHIF…FWFT), 185–205 (GDFG…SFEF), 231–251 (AFLL…HVWL), 259–279 (TPIS…FLVA), 281–301 (LLPL…IGVI), 328–348 (LGYM…FHLI), 355–375 (ALLF…VGYS), 397–417 (TTFF…CFWS), 426–446 (WLYS…TAFY), 550–570 (LFPL…GIHF), 608–628 (FYSV…YGSV), and 726–746 (LFLY…YNFL).

Belongs to the complex I subunit 5 family. In terms of assembly, NDH is composed of at least 16 different subunits, 5 of which are encoded in the nucleus.

It is found in the plastid. Its subcellular location is the chloroplast thylakoid membrane. The catalysed reaction is a plastoquinone + NADH + (n+1) H(+)(in) = a plastoquinol + NAD(+) + n H(+)(out). It catalyses the reaction a plastoquinone + NADPH + (n+1) H(+)(in) = a plastoquinol + NADP(+) + n H(+)(out). Its function is as follows. NDH shuttles electrons from NAD(P)H:plastoquinone, via FMN and iron-sulfur (Fe-S) centers, to quinones in the photosynthetic chain and possibly in a chloroplast respiratory chain. The immediate electron acceptor for the enzyme in this species is believed to be plastoquinone. Couples the redox reaction to proton translocation, and thus conserves the redox energy in a proton gradient. In Nymphaea alba (White water-lily), this protein is NAD(P)H-quinone oxidoreductase subunit 5, chloroplastic (ndhF).